The sequence spans 95 residues: Protein TusB (95 aa).

It belongs to the DsrH/TusB family. As to quaternary structure, heterohexamer, formed by a dimer of trimers. The hexameric TusBCD complex contains 2 copies each of TusB, TusC and TusD. The TusBCD complex interacts with TusE.

The protein resides in the cytoplasm. Its function is as follows. Part of a sulfur-relay system required for 2-thiolation of 5-methylaminomethyl-2-thiouridine (mnm(5)s(2)U) at tRNA wobble positions. In Klebsiella pneumoniae subsp. pneumoniae (strain ATCC 700721 / MGH 78578), this protein is Protein TusB.